The chain runs to 198 residues: Recombination protein RecR (198 aa).

The segment at 57 to 72 adopts a C4-type zinc-finger fold; it reads CSVCGNITDEDPCEIC. The Toprim domain occupies 80–175; that stretch reads EMILVVEQPK…KVTRLAHGLA (96 aa).

This sequence belongs to the RecR family.

May play a role in DNA repair. It seems to be involved in an RecBC-independent recombinational process of DNA repair. It may act with RecF and RecO. This chain is Recombination protein RecR, found in Latilactobacillus sakei subsp. sakei (strain 23K) (Lactobacillus sakei subsp. sakei).